The sequence spans 158 residues: MGRFLLVTLSMLVVTFSLNEANSCCCPQDWLPKNGFCYKVFNDLKNWNDAEMFCRKFKPGCHLASIHSNADSADLAEYISDYLKSDGHVWIGLNDPRKQRTWVWSDRSSTNYLAWNQGEPNNSKNIEYCVHLWALTGYLKWNDTPCEALYHFICQCKF.

A signal peptide spans 1-20 (MGRFLLVTLSMLVVTFSLNE). 3 disulfide bridges follow: Cys-26/Cys-37, Cys-54/Cys-154, and Cys-129/Cys-146. A C-type lectin domain is found at 33-155 (KNGFCYKVFN…CEALYHFICQ (123 aa)). Residues 119-121 (EPN) carry the Mannose-binding motif. Asn-121 is a glycosylation site (N-linked (GlcNAc...) asparagine). The Ca(2+) site is built by Glu-127, Asn-142, and Asp-143.

This sequence belongs to the true venom lectin family. As to quaternary structure, homodimer; disulfide-linked. Expressed by the venom gland.

It is found in the secreted. Mannose-binding lectin that binds to and agglutinates erythrocytes in a calcium-dependent manner. This is C-type lectin mannose-binding isoform from Notechis scutatus scutatus (Mainland tiger snake).